The chain runs to 458 residues: Oxysterol-binding protein-related protein 3B (458 aa).

Disordered stretches follow at residues 47 to 66, 370 to 401, and 431 to 458; these read VINP…RGRW, DMSK…AFTP, and RAAA…DLST. Positions 375 to 396 are enriched in basic and acidic residues; it reads GYEKSSMEERQRAEKRTREEKG. Residues 443-458 are compositionally biased toward polar residues; it reads PKSIQFNPWQFQDLST.

This sequence belongs to the OSBP family. As to expression, expressed in roots, leaves, stems and flowers.

Functionally, may be involved in the transport of sterols. The protein is Oxysterol-binding protein-related protein 3B (ORP3B) of Arabidopsis thaliana (Mouse-ear cress).